Reading from the N-terminus, the 145-residue chain is Deoxyuridine 5'-triphosphate nucleotidohydrolase (145 aa).

Substrate-binding positions include 62-64 (RSG), N75, 79-81 (TVD), and K89.

The protein belongs to the dUTPase family. It depends on Mg(2+) as a cofactor.

It carries out the reaction dUTP + H2O = dUMP + diphosphate + H(+). It functions in the pathway pyrimidine metabolism; dUMP biosynthesis; dUMP from dCTP (dUTP route): step 2/2. Its function is as follows. This enzyme is involved in nucleotide metabolism: it produces dUMP, the immediate precursor of thymidine nucleotides and it decreases the intracellular concentration of dUTP so that uracil cannot be incorporated into DNA. The polypeptide is Deoxyuridine 5'-triphosphate nucleotidohydrolase (Helicobacter pylori (strain ATCC 700392 / 26695) (Campylobacter pylori)).